The sequence spans 407 residues: Phosphopentomutase (407 aa).

Asp-10, Asp-306, His-311, Asp-347, His-348, and His-359 together coordinate Mn(2+).

This sequence belongs to the phosphopentomutase family. It depends on Mn(2+) as a cofactor.

It localises to the cytoplasm. It carries out the reaction 2-deoxy-alpha-D-ribose 1-phosphate = 2-deoxy-D-ribose 5-phosphate. The catalysed reaction is alpha-D-ribose 1-phosphate = D-ribose 5-phosphate. It functions in the pathway carbohydrate degradation; 2-deoxy-D-ribose 1-phosphate degradation; D-glyceraldehyde 3-phosphate and acetaldehyde from 2-deoxy-alpha-D-ribose 1-phosphate: step 1/2. In terms of biological role, isomerase that catalyzes the conversion of deoxy-ribose 1-phosphate (dRib-1-P) and ribose 1-phosphate (Rib-1-P) to deoxy-ribose 5-phosphate (dRib-5-P) and ribose 5-phosphate (Rib-5-P), respectively. This chain is Phosphopentomutase, found in Enterobacter sp. (strain 638).